The chain runs to 380 residues: Chaperone protein DnaJ (380 aa).

One can recognise a J domain in the interval 5–69; the sequence is DFYEVLGVGR…QKKAAYDQYG (65 aa). The CR-type zinc-finger motif lies at 135–213; it reads GCSKEIRVPT…CHGQGRVEKT (79 aa). The Zn(2+) site is built by Cys148, Cys151, Cys165, Cys168, Cys187, Cys190, Cys201, and Cys204. CXXCXGXG motif repeat units follow at residues 148–155, 165–172, 187–194, and 201–208; these read CDSCDGSG, CGTCHGQG, CPHCHGRG, and CNSCHGQG.

The protein belongs to the DnaJ family. In terms of assembly, homodimer. Zn(2+) is required as a cofactor.

The protein resides in the cytoplasm. In terms of biological role, participates actively in the response to hyperosmotic and heat shock by preventing the aggregation of stress-denatured proteins and by disaggregating proteins, also in an autonomous, DnaK-independent fashion. Unfolded proteins bind initially to DnaJ; upon interaction with the DnaJ-bound protein, DnaK hydrolyzes its bound ATP, resulting in the formation of a stable complex. GrpE releases ADP from DnaK; ATP binding to DnaK triggers the release of the substrate protein, thus completing the reaction cycle. Several rounds of ATP-dependent interactions between DnaJ, DnaK and GrpE are required for fully efficient folding. Also involved, together with DnaK and GrpE, in the DNA replication of plasmids through activation of initiation proteins. This Photobacterium profundum (strain SS9) protein is Chaperone protein DnaJ.